A 338-amino-acid polypeptide reads, in one-letter code: Malate dehydrogenase, mitochondrial (338 aa).

Residues M1–N24 constitute a mitochondrion transit peptide. NAD(+) is bound by residues G31–G37 and D57. A glycan (O-linked (GlcNAc) serine) is linked at S33. N6-acetyllysine; alternate occurs at positions 78 and 91. Residues K78 and K91 each carry the N6-succinyllysine; alternate modification. Substrate-binding residues include R104 and R110. NAD(+)-binding positions include N117 and I140–N142. N142 lines the substrate pocket. K165 is modified (N6-acetyllysine). Position 176 (R176) interacts with substrate. K185 carries the post-translational modification N6-acetyllysine; alternate. At K185 the chain carries N6-succinyllysine; alternate. H200 functions as the Proton acceptor in the catalytic mechanism. K203 is subject to N6-succinyllysine. 2 positions are modified to N6-acetyllysine; alternate: K215 and K239. 2 positions are modified to N6-succinyllysine; alternate: K215 and K239. N6-malonyllysine; alternate is present on K239. S246 bears the Phosphoserine mark. M251 is a binding site for NAD(+). The residue at position 269 (K269) is an N6-succinyllysine. K296, K301, K307, K314, and K324 each carry N6-acetyllysine; alternate. N6-succinyllysine; alternate is present on residues K296, K301, K307, K314, and K324. K307 carries the post-translational modification N6-malonyllysine; alternate. S326 carries the phosphoserine modification. N6-acetyllysine; alternate is present on residues K328, K329, and K335. K328 carries the post-translational modification N6-succinyllysine; alternate. An N6-malonyllysine; alternate modification is found at K329. K335 is subject to N6-succinyllysine; alternate.

Belongs to the LDH/MDH superfamily. MDH type 1 family. Homodimer. Post-translationally, acetylation is enhanced after treatment either with trichostin A (TCA) or with nicotinamide (NAM) with the appearance of tri- and tetraacetylations. Glucose also increases acetylation.

It localises to the mitochondrion matrix. It catalyses the reaction (S)-malate + NAD(+) = oxaloacetate + NADH + H(+). With respect to regulation, enzyme activity is enhanced by acetylation. This is Malate dehydrogenase, mitochondrial (MDH2) from Sus scrofa (Pig).